Reading from the N-terminus, the 61-residue chain is Protein YncO (61 aa).

Residues 18-38 (HVFLYVFYIFLFLVLFIMTIY) form a helical membrane-spanning segment.

Its subcellular location is the cell inner membrane. This is Protein YncO from Escherichia coli (strain K12).